The chain runs to 590 residues: Guanylate-binding protein 5 (590 aa).

Positions M1–G306 are NLRP3-binding. Positions M1–S310 are GTPase domain (Globular). The 243-residue stretch at T35–K277 folds into the GB1/RHD3-type G domain. GTP-binding positions include G45–S52, V67–S69, R182–D183, and L246. The segment at Q529 to S590 is required for tetramerization, but not for dimerization. Cysteine methyl ester is present on C587. Residue C587 is the site of S-geranylgeranyl cysteine attachment. Residues V588–S590 constitute a propeptide, removed in mature form.

This sequence belongs to the TRAFAC class dynamin-like GTPase superfamily. GB1/RHD3 GTPase family. GB1 subfamily. Homodimer; homodimerizes upon GTP-binding, forming a close face-to-face dimer. Heterodimer with other family members, including GBP1, GBP2, GBP3 and GBP4. May also form tetramers (dimer of dimers) in the presence of GTP. Interacts with NLRP3, possibly in its tetrameric form, and promotes PYCARD/ASC polymerization. Isoprenylation is required for proper subcellular location. Low expression, if any, in many tissues in the absence of stimulation.

It is found in the cytoplasmic vesicle membrane. It localises to the golgi apparatus membrane. The protein localises to the cytoplasm. It carries out the reaction GTP + H2O = GDP + phosphate + H(+). Interferon (IFN)-inducible GTPase that plays important roles in innate immunity against a diverse range of bacterial, viral and protozoan pathogens. Hydrolyzes GTP, but in contrast to other family members, does not produce GMP. Following infection, recruited to the pathogen-containing vacuoles or vacuole-escaped bacteria and acts as a positive regulator of inflammasome assembly by promoting the release of inflammasome ligands from bacteria. Acts by promoting lysis of pathogen-containing vacuoles, releasing pathogens into the cytosol. Following pathogen release in the cytosol, promotes recruitment of proteins that mediate bacterial cytolysis, such as Gm12250/Irgb10: this liberates ligands that are detected by inflammasomes, such as lipopolysaccharide (LPS) that activates the non-canonical CASP4/CASP11 inflammasome or double-stranded DNA (dsDNA) that activates the AIM2 inflammasome. As an activator of NLRP3 inflammasome assembly: promotes selective NLRP3 inflammasome assembly in response to microbial and soluble, but not crystalline, agents. Independently of its GTPase activity, acts as an inhibitor of various viruses infectivity by inhibiting FURIN-mediated maturation of viral envelope proteins. In Mus musculus (Mouse), this protein is Guanylate-binding protein 5.